A 349-amino-acid chain; its full sequence is S-adenosylmethionine:tRNA ribosyltransferase-isomerase (349 aa).

It belongs to the QueA family. In terms of assembly, monomer.

It is found in the cytoplasm. It carries out the reaction 7-aminomethyl-7-carbaguanosine(34) in tRNA + S-adenosyl-L-methionine = epoxyqueuosine(34) in tRNA + adenine + L-methionine + 2 H(+). It participates in tRNA modification; tRNA-queuosine biosynthesis. In terms of biological role, transfers and isomerizes the ribose moiety from AdoMet to the 7-aminomethyl group of 7-deazaguanine (preQ1-tRNA) to give epoxyqueuosine (oQ-tRNA). This chain is S-adenosylmethionine:tRNA ribosyltransferase-isomerase, found in Cupriavidus pinatubonensis (strain JMP 134 / LMG 1197) (Cupriavidus necator (strain JMP 134)).